Here is a 732-residue protein sequence, read N- to C-terminus: Serine/threonine-protein kinase CBK1 (732 aa).

The segment at 111–240 (SFDNHLNVDP…STEAANSDMT (130 aa)) is disordered. Polar residues predominate over residues 119–159 (DPNNTERFTSMDSMNFQPPASTFTQLGNGSSTNLSEISSGQ). Over residues 160–171 (NSLLSNHSVNNL) the composition is skewed to low complexity. Over residues 172-183 (PTALTSDTSPPV) the composition is skewed to polar residues. Residues 185–221 (QHPQFQPQQQQQQQQPQQQQIFQQQQQQQQQQQQPQQ) show a composition bias toward low complexity. Polar residues predominate over residues 222-240 (SRAVVNQSVSTEAANSDMT). A coiled-coil region spans residues 281–310 (HAIERNQRRLELENKIANEDIGSSEERKNR). One can recognise a Protein kinase domain in the interval 335-647 (FHTVKVIGKG…AEEIKQHPFF (313 aa)). Residues 341-349 (IGKGAFGEV) and K364 contribute to the ATP site. The active-site Proton acceptor is D458. Residues 648 to 730 (RGVDWDSIRD…SRFDYLTRKN (83 aa)) enclose the AGC-kinase C-terminal domain.

The protein belongs to the protein kinase superfamily. STE Ser/Thr protein kinase family. COT1 subfamily. As to quaternary structure, interacts with MOB2 and BCR1.

The protein resides in the bud neck. Its subcellular location is the cell tip. It carries out the reaction L-seryl-[protein] + ATP = O-phospho-L-seryl-[protein] + ADP + H(+). It catalyses the reaction L-threonyl-[protein] + ATP = O-phospho-L-threonyl-[protein] + ADP + H(+). Its function is as follows. Serine/threonine-protein kinase required for wild-type hyphal growth and transcriptional regulation of cell-wall-associated genes. Involved in the biofilm formation through phosphorylation of the master regulator of biofilm formation BCR1. This Candida albicans (strain SC5314 / ATCC MYA-2876) (Yeast) protein is Serine/threonine-protein kinase CBK1 (CBK1).